Reading from the N-terminus, the 703-residue chain is Calpain-8 (703 aa).

Residues 45–344 (LFKDPEFPAC…FSRLEICNLS (300 aa)) enclose the Calpain catalytic domain. Catalysis depends on residues cysteine 105, histidine 262, and asparagine 286. The interval 356–379 (WNLVLFNGHWTRGSTAGGCQNYPA) is domain III. EF-hand domains lie at 575 to 610 (FNIN…IQKY), 618 to 640 (DYNH…AGFT), and 670 to 703 (IRLE…CVLV). Aspartate 588, asparagine 590, threonine 592, threonine 594, glutamate 599, aspartate 618, asparagine 620, serine 622, threonine 624, and glutamate 629 together coordinate Ca(2+).

It belongs to the peptidase C2 family. In terms of assembly, monomer and homooligomer. Interacts with COPS1/GPS1, COPB1, EYA2, NME2, NME4 and TOMM70. It depends on Ca(2+) as a cofactor. Post-translationally, undergoes autolytic cleavage between Ala-5 and Ala-6 which gives rise to fragments extending from Ala-6 to the C-terminus, Ala-6 to the EF-hand 2 domain and from Ala-6 to the beginning of domain III. As to expression, stomach.

It is found in the cytoplasm. It localises to the golgi apparatus. The catalysed reaction is Broad endopeptidase specificity.. Its function is as follows. Calcium-regulated non-lysosomal thiol-protease. Involved in membrane trafficking in the gastric surface mucus cells (pit cells) and may involve the membrane trafficking of mucus cells via interactions with coat protein. Proteolytically cleaves the beta-subunit of coatomer complex. This is Calpain-8 (CAPN8) from Homo sapiens (Human).